Here is a 1939-residue protein sequence, read N- to C-terminus: Myosin-6 (1939 aa).

Residues 32–81 form the Myosin N-terminal SH3-like domain; the sequence is DIRTECFVPDDKEEFVKAKILSREGGKVIAETENGKTVTVKEDQVLQQNP. The Myosin motor domain maps to 85-780; sequence DKIEDMAMLT…LLGLLEEMRD (696 aa). N6,N6,N6-trimethyllysine is present on K129. 178-185 serves as a coordination point for ATP; that stretch reads GESGAGKT. T379 is modified (phosphothreonine). S417 is subject to Phosphoserine. Actin-binding stretches follow at residues 657–679 and 759–773; these read LNKLMTNLRTTHPHFVRCIIPNE and KFGHTKVFFKAGLLG. Residues 783–812 form the IQ domain; sequence LSRIITRMQAQARGQLMRIEFKKIVERRDA. Positions 842–1939 form a coiled coil; the sequence is LKSAETEKEM…GAKQKMHDEE (1098 aa). Residue S1139 is modified to Phosphoserine. Y1261 is subject to Phosphotyrosine. S1271 is subject to Phosphoserine. Phosphothreonine is present on residues T1277 and T1284. The residue at position 1309 (S1309) is a Phosphoserine. Residue Y1310 is modified to Phosphotyrosine. T1311 carries the post-translational modification Phosphothreonine. S1512 is modified (phosphoserine). Phosphothreonine is present on T1515. Composition is skewed to basic and acidic residues over residues 1826–1837 and 1925–1939; these read GELEAEQKRNAE and KSRDIGAKQKMHDEE. Disordered regions lie at residues 1826–1849 and 1909–1939; these read GELEAEQKRNAESVKGMRKSERRI and EERADIAESQVNKLRAKSRDIGAKQKMHDEE.

This sequence belongs to the TRAFAC class myosin-kinesin ATPase superfamily. Myosin family. As to quaternary structure, muscle myosin is a hexameric protein that consists of 2 heavy chain subunits (MHC), 2 alkali light chain subunits (MLC) and 2 regulatory light chain subunits (MLC-2).

The protein localises to the cytoplasm. It is found in the myofibril. Functionally, muscle contraction. This is Myosin-6 (MYH6) from Homo sapiens (Human).